Here is a 743-residue protein sequence, read N- to C-terminus: Adhesion defective protein 2 (743 aa).

Positions 1-36 (MADPGLRSGVGLPSQQGQKHDLQKDQKQPHVNNADR) are disordered. The segment covering 18 to 28 (QKHDLQKDQKQ) has biased composition (basic and acidic residues). The region spanning 38–70 (TQSLLNSYIYDYLIKKDYCEAARAFGREAQVQT) is the LisH domain. Disordered stretches follow at residues 79–127 (NSLA…PPPP), 264–361 (LQSV…QYPV), 379–426 (RNPH…YGFS), and 476–692 (KERK…KSSD). Serine 89 is modified (phosphoserine). Over residues 98–114 (ISNNESSDENMNVNNGN) the composition is skewed to polar residues. Residues 264–281 (LQSVQQQQKQHQQKKTPQ) show a composition bias toward low complexity. 5 stretches are compositionally biased toward polar residues: residues 282 to 297 (SGST…QPTT), 315 to 353 (IPSS…DTTG), 390 to 399 (PSSTLPQQQK), 408 to 426 (QQPS…YGFS), and 482 to 500 (TSAS…SSVA). Residues 501–520 (KTKSTTPKSTDTPTEATTSP) show a composition bias toward low complexity. Polar residues-rich tracts occupy residues 521 to 544 (VKVS…NMPM) and 556 to 566 (DHPSNYSNLIE). The segment covering 567-578 (NSSTSDTNNADN) has biased composition (low complexity). A compositionally biased stretch (polar residues) spans 586 to 602 (WQLQQTHSSRPTPNASS). A compositionally biased stretch (low complexity) spans 612–631 (PSSANSNAPTPAPTVNTTNP). A compositionally biased stretch (polar residues) spans 661-670 (DNQNQSGKSN). Residues 671–688 (PDTSATPSAPTESTTVAT) are compositionally biased toward low complexity.

This sequence belongs to the FLO8 family.

Its subcellular location is the cytoplasm. The protein resides in the nucleus. Functionally, probable transcriptional regulator involved in cell adhesion. This chain is Adhesion defective protein 2 (adn2), found in Schizosaccharomyces pombe (strain 972 / ATCC 24843) (Fission yeast).